The chain runs to 700 residues: Polyribonucleotide nucleotidyltransferase (700 aa).

The Mg(2+) site is built by Asp485 and Asp491. The region spanning 552–611 (PRITVIKINPEKIRDVIGKGGAVIRALTEETGTTIELEDDGTVKIASSNGEATKEAIRRI) is the KH domain. The 69-residue stretch at 621 to 689 (GRIYNGKVIR…RQGRVRLSIK (69 aa)) folds into the S1 motif domain.

It belongs to the polyribonucleotide nucleotidyltransferase family. As to quaternary structure, component of the RNA degradosome, which is a multiprotein complex involved in RNA processing and mRNA degradation. It depends on Mg(2+) as a cofactor.

It is found in the cytoplasm. It carries out the reaction RNA(n+1) + phosphate = RNA(n) + a ribonucleoside 5'-diphosphate. Involved in mRNA degradation. Catalyzes the phosphorolysis of single-stranded polyribonucleotides processively in the 3'- to 5'-direction. The sequence is that of Polyribonucleotide nucleotidyltransferase from Shewanella baltica (strain OS155 / ATCC BAA-1091).